We begin with the raw amino-acid sequence, 133 residues long: Ribosome-binding factor A (133 aa).

The protein belongs to the RbfA family. As to quaternary structure, monomer. Binds 30S ribosomal subunits, but not 50S ribosomal subunits or 70S ribosomes.

It localises to the cytoplasm. One of several proteins that assist in the late maturation steps of the functional core of the 30S ribosomal subunit. Associates with free 30S ribosomal subunits (but not with 30S subunits that are part of 70S ribosomes or polysomes). Required for efficient processing of 16S rRNA. May interact with the 5'-terminal helix region of 16S rRNA. The polypeptide is Ribosome-binding factor A (Trichormus variabilis (strain ATCC 29413 / PCC 7937) (Anabaena variabilis)).